We begin with the raw amino-acid sequence, 898 residues long: DNA topoisomerase 1 (898 aa).

The 125-residue stretch at 2–126 (SKLVIVESPT…IKRMVFHEIT (125 aa)) folds into the Toprim domain. Positions 8 and 95 each coordinate Mg(2+). The Topo IA-type catalytic domain occupies 141-583 (DENLVHAQET…GFFLGESGLE (443 aa)). The segment at 175–180 (SAGRVQ) is interaction with DNA. The O-(5'-phospho-DNA)-tyrosine intermediate role is filled by Tyr320. A disordered region spans residues 840 to 898 (AEKAGSGKKTSRKKATTTAKGTKKTTSKKASATGTAKKTTTKRTTRKKAASPDQSSEAG). Positions 848–866 (KTSRKKATTTAKGTKKTTS) are enriched in basic residues. Low complexity predominate over residues 867 to 877 (KKASATGTAKK). The span at 878–888 (TTTKRTTRKKA) shows a compositional bias: basic residues.

Belongs to the type IA topoisomerase family. In terms of assembly, monomer. Mg(2+) is required as a cofactor.

The catalysed reaction is ATP-independent breakage of single-stranded DNA, followed by passage and rejoining.. Releases the supercoiling and torsional tension of DNA, which is introduced during the DNA replication and transcription, by transiently cleaving and rejoining one strand of the DNA duplex. Introduces a single-strand break via transesterification at a target site in duplex DNA. The scissile phosphodiester is attacked by the catalytic tyrosine of the enzyme, resulting in the formation of a DNA-(5'-phosphotyrosyl)-enzyme intermediate and the expulsion of a 3'-OH DNA strand. The free DNA strand then undergoes passage around the unbroken strand, thus removing DNA supercoils. Finally, in the religation step, the DNA 3'-OH attacks the covalent intermediate to expel the active-site tyrosine and restore the DNA phosphodiester backbone. The protein is DNA topoisomerase 1 of Synechocystis sp. (strain ATCC 27184 / PCC 6803 / Kazusa).